A 331-amino-acid polypeptide reads, in one-letter code: Smad-related protein daf-14 (331 aa).

The 198-residue stretch at 134 to 331 folds into the MH2 domain; that stretch reads WCTIFYYELT…NERPEIGSRS (198 aa). Residues 168–187 are disordered; it reads ECRMSLTSQPSSRNSKSSQI. The span at 175-185 shows a compositional bias: low complexity; it reads SQPSSRNSKSS.

Interacts with R-SMAD daf-8 and co-SMAD daf-3. Interacts with daf-3 in a daf-8 dependent manner.

Functionally, probably an atypical receptor-regulated SMAD (R-SMAD) that is an intracellular signal transducer and transcriptional modulator activated by TGF-beta-like daf-7 signaling. Plays a role in TGF-beta-like daf-7 signaling in regulating entry into a developmentally arrested larval state known as dauer, in response to harsh environmental conditions; partially redundant with R-SMAD daf-8. In Caenorhabditis elegans, this protein is Smad-related protein daf-14.